Here is a 68-residue protein sequence, read N- to C-terminus: Large ribosomal subunit protein bL32 (68 aa).

Belongs to the bacterial ribosomal protein bL32 family.

This is Large ribosomal subunit protein bL32 from Orientia tsutsugamushi (strain Boryong) (Rickettsia tsutsugamushi).